A 369-amino-acid chain; its full sequence is Gibberellin 3-beta-dioxygenase 2-3 (369 aa).

One can recognise a Fe2OG dioxygenase domain in the interval 205-306 (MTATMHLNWY…RISLGYFLGP (102 aa)). H229, D231, and H287 together coordinate Fe cation. R297 is an active-site residue.

This sequence belongs to the iron/ascorbate-dependent oxidoreductase family. GA3OX subfamily. The cofactor is L-ascorbate. Fe cation serves as cofactor.

The enzyme catalyses gibberellin A20 + 2-oxoglutarate + O2 = gibberellin A1 + succinate + CO2. Converts the inactive gibberellin precursors GA9 and GA20 in the bioactives gibberellins GA4 and GA1. This Triticum aestivum (Wheat) protein is Gibberellin 3-beta-dioxygenase 2-3 (GA3ox2-3).